We begin with the raw amino-acid sequence, 94 residues long: Phormicin (94 aa).

Positions 1–23 are cleaved as a signal peptide; the sequence is MKFFMVFVVTFCLAVCFVSQSLA. A propeptide spanning residues 24-54 is cleaved from the precursor; it reads IPADAANDAHFVDGVQALKEIEPELHGRYKR. 3 cysteine pairs are disulfide-bonded: Cys57–Cys84, Cys70–Cys90, and Cys74–Cys92.

This sequence belongs to the invertebrate defensin family. Type 1 subfamily.

The protein resides in the secreted. Its function is as follows. Responsible for the anti Gram-positive activity of immune hemolymph of P.terraenovae. The chain is Phormicin from Protophormia terraenovae (Northern blowfly).